We begin with the raw amino-acid sequence, 126 residues long: Holo-[acyl-carrier-protein] synthase (126 aa).

Mg(2+) is bound by residues D9 and E58.

Belongs to the P-Pant transferase superfamily. AcpS family. It depends on Mg(2+) as a cofactor.

It is found in the cytoplasm. The enzyme catalyses apo-[ACP] + CoA = holo-[ACP] + adenosine 3',5'-bisphosphate + H(+). Its function is as follows. Transfers the 4'-phosphopantetheine moiety from coenzyme A to a Ser of acyl-carrier-protein. This is Holo-[acyl-carrier-protein] synthase from Shewanella frigidimarina (strain NCIMB 400).